Here is a 101-residue protein sequence, read N- to C-terminus: ATP-dependent Clp protease adapter protein ClpS 2 (101 aa).

The protein belongs to the ClpS family. Binds to the N-terminal domain of the chaperone ClpA.

Its function is as follows. Involved in the modulation of the specificity of the ClpAP-mediated ATP-dependent protein degradation. The protein is ATP-dependent Clp protease adapter protein ClpS 2 of Mesorhizobium japonicum (strain LMG 29417 / CECT 9101 / MAFF 303099) (Mesorhizobium loti (strain MAFF 303099)).